We begin with the raw amino-acid sequence, 236 residues long: MADDWESAADSEVVIRPTAAASVNKWEGEDEDEDIKDSWEDEEEKKDEEKPTKTEAPAKPKPNKALKAKLEQQARLEEEAEAQRVASLSPAEKLAEKLRLQKIQEASDLKHAQEAFGVTSTCGGLDAFNPESKEEFKEFGATLSWKVAQFRESEHFPQFVEDLVRSLCVNLSAADIKKVKMNVEILHSEKLKLEKANAKKPAGKGKGKVTLRTENDDIDGYQKYGNDFTEDYDDFM.

A disordered region spans residues 1 to 88 (MADDWESAAD…EAEAQRVASL (88 aa)). Positions 28 to 46 (GEDEDEDIKDSWEDEEEKK) are enriched in acidic residues. 2 stretches are compositionally biased toward basic and acidic residues: residues 47-58 (DEEKPTKTEAPA) and 68-77 (AKLEQQARLE).

The protein belongs to the eIF-3 subunit J family. As to quaternary structure, component of the eukaryotic translation initiation factor 3 (eIF-3) complex. The eIF-3 complex interacts with pix.

It is found in the cytoplasm. Its function is as follows. Component of the eukaryotic translation initiation factor 3 (eIF-3) complex, which is involved in protein synthesis of a specialized repertoire of mRNAs and, together with other initiation factors, stimulates binding of mRNA and methionyl-tRNAi to the 40S ribosome. The eIF-3 complex specifically targets and initiates translation of a subset of mRNAs involved in cell proliferation. The chain is Eukaryotic translation initiation factor 3 subunit J from Drosophila erecta (Fruit fly).